Consider the following 102-residue polypeptide: Acid shock protein (102 aa).

Residues 1-21 (MKKVLALVVAAAMGLSSAAFA) form the signal peptide. Positions 22–58 (AETAITPAPTATTTKAAPAKTTHHKKQHKAAPAQKAQ) are excised as a propeptide. Residues 26–41 (ITPAPTATTTKAAPAK) show a composition bias toward low complexity. The interval 26–102 (ITPAPTATTT…PAKPAAQPAA (77 aa)) is disordered. Over residues 80–90 (AAKKHAKKHSH) the composition is skewed to basic residues. The span at 91-102 (QQPAKPAAQPAA) shows a compositional bias: low complexity.

It belongs to the Asr family. In terms of processing, proteolytic processing gives rise to the active protein.

Its subcellular location is the periplasm. Required for growth and/or survival at acidic conditions. This is Acid shock protein from Escherichia coli O81 (strain ED1a).